The following is a 149-amino-acid chain: D-aminoacyl-tRNA deacylase (149 aa).

Residues 137-138 carry the Gly-cisPro motif, important for rejection of L-amino acids motif; it reads GP.

This sequence belongs to the DTD family. As to quaternary structure, homodimer.

The protein resides in the cytoplasm. The catalysed reaction is glycyl-tRNA(Ala) + H2O = tRNA(Ala) + glycine + H(+). The enzyme catalyses a D-aminoacyl-tRNA + H2O = a tRNA + a D-alpha-amino acid + H(+). Functionally, an aminoacyl-tRNA editing enzyme that deacylates mischarged D-aminoacyl-tRNAs. Also deacylates mischarged glycyl-tRNA(Ala), protecting cells against glycine mischarging by AlaRS. Acts via tRNA-based rather than protein-based catalysis; rejects L-amino acids rather than detecting D-amino acids in the active site. By recycling D-aminoacyl-tRNA to D-amino acids and free tRNA molecules, this enzyme counteracts the toxicity associated with the formation of D-aminoacyl-tRNA entities in vivo and helps enforce protein L-homochirality. This Thermotoga petrophila (strain ATCC BAA-488 / DSM 13995 / JCM 10881 / RKU-1) protein is D-aminoacyl-tRNA deacylase.